A 244-amino-acid polypeptide reads, in one-letter code: Extracellular superoxide dismutase [Cu-Zn] (244 aa).

The first 18 residues, 1–18 (MLALVCSCLLLAALPADT), serve as a signal peptide directing secretion. 2 disulfides stabilise this stretch: C67–C212 and C129–C211. A glycan (N-linked (GlcNAc...) asparagine) is linked at N111. H118, H120, and H135 together coordinate Cu cation. Zn(2+) contacts are provided by H135, H143, H146, and D149. Residue H185 participates in Cu cation binding. The interval 221–244 (PWARQAQEHAERKKRRRESECKAA) is disordered. Over residues 226–244 (AQEHAERKKRRRESECKAA) the composition is skewed to basic and acidic residues.

This sequence belongs to the Cu-Zn superoxide dismutase family. In terms of assembly, homotetramer. Directly interacts with ATP7A; this interaction is copper-dependent and is required for SOD3 activity. Cu cation serves as cofactor. The cofactor is Zn(2+).

The protein localises to the secreted. The protein resides in the extracellular space. It is found in the golgi apparatus. It localises to the trans-Golgi network. It carries out the reaction 2 superoxide + 2 H(+) = H2O2 + O2. Functionally, protect the extracellular space from toxic effect of reactive oxygen intermediates by converting superoxide radicals into hydrogen peroxide and oxygen. This is Extracellular superoxide dismutase [Cu-Zn] (SOD3) from Oryctolagus cuniculus (Rabbit).